The primary structure comprises 239 residues: Small ribosomal subunit protein eS1 (239 aa).

A disordered region spans residues 1 to 24 (MAIQPPGSYPQGNKKGKAKKKSGQ).

The protein belongs to the eukaryotic ribosomal protein eS1 family. In terms of assembly, component of the small ribosomal subunit. Mature ribosomes consist of a small (40S) and a large (60S) subunit. The 40S subunit contains about 33 different proteins and 1 molecule of RNA (18S). The 60S subunit contains about 49 different proteins and 3 molecules of RNA (25S, 5.8S and 5S).

Its subcellular location is the cytoplasm. The sequence is that of Small ribosomal subunit protein eS1 from Encephalitozoon cuniculi (strain GB-M1) (Microsporidian parasite).